The chain runs to 418 residues: Probable serine/threonine-protein kinase DDB_G0280461 (418 aa).

One can recognise a Protein kinase domain in the interval 14–271; it reads KIEENEFSKG…IVQTLDQLAI (258 aa). ATP is bound by residues 20-28 and Lys-41; that span reads FSKGSFAKV. Asp-139 acts as the Proton acceptor in catalysis. 2 disordered regions span residues 327-356 and 377-418; these read NNNN…NNNN and SVNS…CLIN. Residues 377–402 are compositionally biased toward low complexity; that stretch reads SVNSSFSNSSLGSNGSNSSGTSTSSG. Residues 403-418 show a composition bias toward basic residues; sequence GKKRSQKRKSWKCLIN.

Belongs to the protein kinase superfamily. TKL Ser/Thr protein kinase family.

It catalyses the reaction L-seryl-[protein] + ATP = O-phospho-L-seryl-[protein] + ADP + H(+). The catalysed reaction is L-threonyl-[protein] + ATP = O-phospho-L-threonyl-[protein] + ADP + H(+). The sequence is that of Probable serine/threonine-protein kinase DDB_G0280461 from Dictyostelium discoideum (Social amoeba).